Consider the following 209-residue polypeptide: Probable transcriptional regulator ycf29 (209 aa).

The Response regulatory domain maps to 4 to 120; it reads NLMLVENDTV…ELVSLIKNLI (117 aa). The residue at position 53 (D53) is a 4-aspartylphosphate. Residues 139–204 form the HTH luxR-type domain; sequence PLFQLLYLTP…LLVKYSIKNN (66 aa).

It localises to the plastid. Its subcellular location is the chloroplast. The protein is Probable transcriptional regulator ycf29 (ycf29) of Porphyra purpurea (Red seaweed).